The sequence spans 590 residues: UvrABC system protein C (590 aa).

One can recognise a GIY-YIG domain in the interval Glu-11–Val-85. Residues Asp-194 to Phe-229 form the UVR domain.

This sequence belongs to the UvrC family. As to quaternary structure, interacts with UvrB in an incision complex.

The protein resides in the cytoplasm. In terms of biological role, the UvrABC repair system catalyzes the recognition and processing of DNA lesions. UvrC both incises the 5' and 3' sides of the lesion. The N-terminal half is responsible for the 3' incision and the C-terminal half is responsible for the 5' incision. In Thermus thermophilus (strain ATCC 27634 / DSM 579 / HB8), this protein is UvrABC system protein C.